Here is a 603-residue protein sequence, read N- to C-terminus: Elongation factor 4 (603 aa).

Positions 7–191 (DNIRNFSIVA…AIVTRLPPPK (185 aa)) constitute a tr-type G domain. GTP contacts are provided by residues 19–24 (DHGKST) and 138–141 (NKVD).

This sequence belongs to the TRAFAC class translation factor GTPase superfamily. Classic translation factor GTPase family. LepA subfamily.

It localises to the cell inner membrane. It carries out the reaction GTP + H2O = GDP + phosphate + H(+). In terms of biological role, required for accurate and efficient protein synthesis under certain stress conditions. May act as a fidelity factor of the translation reaction, by catalyzing a one-codon backward translocation of tRNAs on improperly translocated ribosomes. Back-translocation proceeds from a post-translocation (POST) complex to a pre-translocation (PRE) complex, thus giving elongation factor G a second chance to translocate the tRNAs correctly. Binds to ribosomes in a GTP-dependent manner. This chain is Elongation factor 4, found in Rhodopseudomonas palustris (strain BisA53).